The primary structure comprises 116 residues: uncharacterized protein (116 aa).

The disordered stretch occupies residues 77–116 (SATSHYPKADDPQRFARSVSRGPSRVRRPARNSASRPVRR).

This is an uncharacterized protein from Frog virus 3 (isolate Goorha) (FV-3).